Consider the following 448-residue polypeptide: Histidine--tRNA ligase (448 aa).

Belongs to the class-II aminoacyl-tRNA synthetase family. Homodimer.

It is found in the cytoplasm. The enzyme catalyses tRNA(His) + L-histidine + ATP = L-histidyl-tRNA(His) + AMP + diphosphate + H(+). This chain is Histidine--tRNA ligase, found in Treponema denticola (strain ATCC 35405 / DSM 14222 / CIP 103919 / JCM 8153 / KCTC 15104).